Here is a 464-residue protein sequence, read N- to C-terminus: Macrophage metalloelastase (464 aa).

Residues 1–17 form the signal peptide; it reads MKFLLLILTLWVTSSGA. Residues 18–100 constitute a propeptide, activation peptide; it reads DPLKENDMLF…DVYHFKTMPG (83 aa). N-linked (GlcNAc...) asparagine glycosylation is present at Asn-69. The Cysteine switch motif lies at 85-92; the sequence is PRCGVPDV. Cys-87 lines the Zn(2+) pocket. The Ca(2+) site is built by Asp-119 and Asp-153. His-163 and Asp-165 together coordinate Zn(2+). 4 residues coordinate Ca(2+): Asp-170, Gly-171, Gly-173, and Val-175. Position 178 (His-178) interacts with Zn(2+). Residues Gly-185, Gly-187, and Asp-189 each contribute to the Ca(2+) site. His-191 is a Zn(2+) binding site. Ca(2+) contacts are provided by Asp-193, Glu-194, and Glu-196. A Zn(2+)-binding site is contributed by His-213. Glu-214 is an active-site residue. Zn(2+) contacts are provided by His-217 and His-223. 4 Hemopexin repeats span residues 274 to 323, 324 to 370, 372 to 420, and 421 to 464; these read PTAC…WPTL, PSGI…GFPD, VKKI…FPGI, and GPKI…WFDC. Residues Cys-277 and Cys-464 are joined by a disulfide bond. Residues Asp-284, Glu-328, Asp-376, and Asp-425 each coordinate Ca(2+).

The protein belongs to the peptidase M10A family. The cofactor is Ca(2+). Zn(2+) serves as cofactor.

The protein resides in the secreted. It is found in the extracellular space. Its subcellular location is the extracellular matrix. The enzyme catalyses Hydrolysis of soluble and insoluble elastin. Specific cleavages are also produced at 14-Ala-|-Leu-15 and 16-Tyr-|-Leu-17 in the B chain of insulin.. Its function is as follows. May be involved in tissue injury and remodeling. Has significant elastolytic activity. Can accept large and small amino acids at the P1' site, but has a preference for leucine. Aromatic or hydrophobic residues are preferred at the P1 site, with small hydrophobic residues (preferably alanine) occupying P3. This Oryctolagus cuniculus (Rabbit) protein is Macrophage metalloelastase (MMP12).